The following is a 185-amino-acid chain: Translocon-associated protein subunit gamma (185 aa).

An N-acetylmethionine modification is found at Met-1. The Lumenal segment spans residues 1-27; it reads MAPKGGPKQQSEEDLLLQDFSRNLSAK. Ser-11 carries the post-translational modification Phosphoserine. The chain crosses the membrane as a helical span at residues 28 to 48; sequence SSALFFGNAFIVSAIPIWLYW. Over 49 to 54 the chain is Cytoplasmic; it reads RIWHMD. Residues 55-76 form a helical membrane-spanning segment; the sequence is LIQSAVLYSVMTLVSTYLVAFA. Over 77–135 the chain is Lumenal; that stretch reads YKNVKFVLKHKVAQKREDAVSKEVTRKLSEADNRKMSRKEKDERILWKKNEVADYEATT. Ser-105 bears the Phosphoserine mark. A helical membrane pass occupies residues 136–157; it reads FSIFYNNTLFLVLVIVASFFIL. At 158–163 the chain is on the cytoplasmic side; sequence KNFNPT. Residues 164–184 form a helical membrane-spanning segment; that stretch reads VNYILSISASSGLIALLSTGS.

This sequence belongs to the TRAP-gamma family. Heterotetramer of TRAP-alpha, TRAP-beta, TRAP-delta and TRAP-gamma.

The protein localises to the endoplasmic reticulum membrane. In terms of biological role, TRAP proteins are part of a complex whose function is to bind calcium to the ER membrane and thereby regulate the retention of ER resident proteins. The chain is Translocon-associated protein subunit gamma (SSR3) from Bos taurus (Bovine).